A 485-amino-acid chain; its full sequence is UDP-N-acetylmuramate--L-alanine ligase (485 aa).

Residue glycine 120 to threonine 126 participates in ATP binding.

It belongs to the MurCDEF family.

It localises to the cytoplasm. It catalyses the reaction UDP-N-acetyl-alpha-D-muramate + L-alanine + ATP = UDP-N-acetyl-alpha-D-muramoyl-L-alanine + ADP + phosphate + H(+). It participates in cell wall biogenesis; peptidoglycan biosynthesis. Its function is as follows. Cell wall formation. The protein is UDP-N-acetylmuramate--L-alanine ligase of Rickettsia massiliae (strain Mtu5).